The primary structure comprises 220 residues: Probable nicotinate-nucleotide adenylyltransferase (220 aa).

It belongs to the NadD family.

The enzyme catalyses nicotinate beta-D-ribonucleotide + ATP + H(+) = deamido-NAD(+) + diphosphate. Its pathway is cofactor biosynthesis; NAD(+) biosynthesis; deamido-NAD(+) from nicotinate D-ribonucleotide: step 1/1. Functionally, catalyzes the reversible adenylation of nicotinate mononucleotide (NaMN) to nicotinic acid adenine dinucleotide (NaAD). This chain is Probable nicotinate-nucleotide adenylyltransferase, found in Laribacter hongkongensis (strain HLHK9).